The chain runs to 173 residues: Co-chaperone protein HscB homolog (173 aa).

The 73-residue stretch at 5 to 77 folds into the J domain; it reads CHFALFDLQP…SQRARYLLAL (73 aa).

It belongs to the HscB family. In terms of assembly, interacts with HscA and stimulates its ATPase activity.

Its function is as follows. Co-chaperone involved in the maturation of iron-sulfur cluster-containing proteins. Seems to help targeting proteins to be folded toward HscA. The sequence is that of Co-chaperone protein HscB homolog from Ectopseudomonas mendocina (strain ymp) (Pseudomonas mendocina).